Consider the following 209-residue polypeptide: Imidazole glycerol phosphate synthase subunit HisH (209 aa).

Residues 3 to 209 enclose the Glutamine amidotransferase type-1 domain; that stretch reads KIGLIDYGMG…WINWLKKNKF (207 aa). C81 acts as the Nucleophile in catalysis. Catalysis depends on residues H185 and E187.

As to quaternary structure, heterodimer of HisH and HisF.

The protein resides in the cytoplasm. The enzyme catalyses 5-[(5-phospho-1-deoxy-D-ribulos-1-ylimino)methylamino]-1-(5-phospho-beta-D-ribosyl)imidazole-4-carboxamide + L-glutamine = D-erythro-1-(imidazol-4-yl)glycerol 3-phosphate + 5-amino-1-(5-phospho-beta-D-ribosyl)imidazole-4-carboxamide + L-glutamate + H(+). The catalysed reaction is L-glutamine + H2O = L-glutamate + NH4(+). The protein operates within amino-acid biosynthesis; L-histidine biosynthesis; L-histidine from 5-phospho-alpha-D-ribose 1-diphosphate: step 5/9. In terms of biological role, IGPS catalyzes the conversion of PRFAR and glutamine to IGP, AICAR and glutamate. The HisH subunit catalyzes the hydrolysis of glutamine to glutamate and ammonia as part of the synthesis of IGP and AICAR. The resulting ammonia molecule is channeled to the active site of HisF. The protein is Imidazole glycerol phosphate synthase subunit HisH of Prochlorococcus marinus (strain NATL2A).